The sequence spans 299 residues: F-actin-capping protein subunit alpha-3 (299 aa).

S2 and S290 each carry phosphoserine.

The protein belongs to the F-actin-capping protein alpha subunit family. As to quaternary structure, component of the F-actin capping complex, composed of a heterodimer of an alpha and a beta subunit. Component of the WASH complex, composed of F-actin-capping protein subunit alpha (CAPZA1, CAPZA2 or CAPZA3), F-actin-capping protein subunit beta (CAPZB), WASHC1, WASHC2, WASHC3, WASHC4 and WASHC5. Exclusively expressed in the testis.

The protein localises to the cytoplasm. It localises to the cytoskeleton. In terms of biological role, F-actin-capping proteins bind in a Ca(2+)-independent manner to the fast growing ends of actin filaments (barbed end) thereby blocking the exchange of subunits at these ends. Unlike other capping proteins (such as gelsolin and severin), these proteins do not sever actin filaments. May play a role in the morphogenesis of spermatid. In Rattus norvegicus (Rat), this protein is F-actin-capping protein subunit alpha-3 (Capza3).